Reading from the N-terminus, the 495-residue chain is UDP-N-acetylmuramoyl-L-alanyl-D-glutamate--2,6-diaminopimelate ligase (495 aa).

UDP-N-acetyl-alpha-D-muramoyl-L-alanyl-D-glutamate is bound by residues Leu-27, Ser-29, and 44–46 (HQT). 116-122 (GTNGKTT) is a binding site for ATP. UDP-N-acetyl-alpha-D-muramoyl-L-alanyl-D-glutamate contacts are provided by residues Asn-157, 158–159 (TT), Ser-185, Gln-191, and Arg-193. Lys-225 is subject to N6-carboxylysine. Residues Arg-390, 414-417 (DNPR), Gly-465, and Glu-469 contribute to the meso-2,6-diaminopimelate site. The Meso-diaminopimelate recognition motif signature appears at 414 to 417 (DNPR).

Belongs to the MurCDEF family. MurE subfamily. It depends on Mg(2+) as a cofactor. In terms of processing, carboxylation is probably crucial for Mg(2+) binding and, consequently, for the gamma-phosphate positioning of ATP.

It is found in the cytoplasm. It catalyses the reaction UDP-N-acetyl-alpha-D-muramoyl-L-alanyl-D-glutamate + meso-2,6-diaminopimelate + ATP = UDP-N-acetyl-alpha-D-muramoyl-L-alanyl-gamma-D-glutamyl-meso-2,6-diaminopimelate + ADP + phosphate + H(+). The protein operates within cell wall biogenesis; peptidoglycan biosynthesis. Catalyzes the addition of meso-diaminopimelic acid to the nucleotide precursor UDP-N-acetylmuramoyl-L-alanyl-D-glutamate (UMAG) in the biosynthesis of bacterial cell-wall peptidoglycan. The sequence is that of UDP-N-acetylmuramoyl-L-alanyl-D-glutamate--2,6-diaminopimelate ligase from Sodalis glossinidius (strain morsitans).